Here is a 1002-residue protein sequence, read N- to C-terminus: MSNPPQGSSLASPIQAAAVTGDKTTLLRLIASSPQVIDQEDQLGRTPLMYSVLGDRRSCAEALLKHGAKVNRPDRSGRTALHLAAQTGNHRLLKLLLSRKADCTHRDLCDITALHLSTRHQDTQCLVLLLKYTPPGQVDAQDQRKQTALHWSAYYNRPQHVRLLVRHGSNIGIPDTEGKIPLHWAAGHKDPEAALTVRCLFEAAPTESLLNWQDYEGRTPLHLAVGDGNQEVVRLLTSYRGCNVAPYDNLFRTPLHWAALLGHTPIAHLLLERNNSPNIPSDSQGATPLHYAAQGNCPDTVRVLLSHPSVRDEADLEGRTALMWAAGKGSDEVVRTMLELNPKLEVNRTDKYGGTALHAASLSGQITTVRILLENRAQADAVDVMKHTPLFRACEMGHREVIATLIKGGAKVHLVDKDGRSPLHWAALGGNANVCQILIENNINPDAQDYEGRTPLQCAAYGGYIGCMEVLMENKADPNIQDKNGRTALHWSCNNGYLDAVKLLLGYNAFPNQMENTEERYTPLDYALLGGHQEVIQFMLEHGALSIAAIQDIAAFKIQAVYKGHKVRRAFQERKNLLMKHEQLRKGAAAKKREGENRQKVKVGQTKGKQKDADSMERQNKSNEQIIKNEVVHEWQGEASGNAEDRKGKHREENLETNHLQHSKHMAKNQRITAQIQSSPSEHEHTNSIQIRTSPSGTSNTQSSPLGNEIPKNMYWDDNPSQKHTQTRRTSRHQMESPDVVVHRIEDLIQKESRRKSHREERKGSHRQRQSSDYRLHTSEKEASDSAIHREEEGKKKETKKGRRTVAVTPKIEACCKGGCGKLSQSEKVSLGIGIQGRVDCITSPEPCETPSRVCRERKTISAKTGQRPLTETHKPPGKACRSSSALKSSLPSHIKQTAIDSKCLDSTLSYIGFGEAIKPLFPMGILREGSFFSKWQNIDIELIPVQARLQLVEREKARKQLFQRKNHAATVIQKAWRTYWVRKSSCKTRHSRSQNNPPAMV.

ANK repeat units lie at residues 9 to 39 (SLAS…VIDQ), 43 to 72 (LGRT…KVNR), 76 to 105 (SGRT…DCTH), 109 to 140 (CDIT…QVDA), 144 to 173 (RKQT…NIGI), 177 to 209 (EGKI…TESL), 216 to 246 (EGRT…NVAP), 250 to 279 (LFRT…SPNI), 284 to 313 (QGAT…VRDE), 317 to 346 (EGRT…KLEV), 352 to 381 (YGGT…QADA), 385 to 414 (MKHT…KVHL), 418 to 447 (DGRS…NPDA), 451 to 480 (EGRT…DPNI), 484 to 513 (NGRT…FPNQ), and 519 to 549 (ERYT…SIAA). Positions 486–494 (RTALHWSCN) match the D-box 1 motif. One can recognise an IQ 1 domain in the interval 551-580 (QDIAAFKIQAVYKGHKVRRAFQERKNLLMK). Basic and acidic residues-rich tracts occupy residues 586–599 (KGAA…ENRQ), 609–621 (KQKD…RQNK), and 643–656 (AEDR…ENLE). 2 disordered regions span residues 586-804 (KGAA…KGRR) and 862-886 (SAKT…SSSA). 2 stretches are compositionally biased toward polar residues: residues 670 to 680 (QRITAQIQSSP) and 687 to 706 (NSIQ…SSPL). Composition is skewed to basic and acidic residues over residues 733 to 763 (HQME…EERK) and 770 to 796 (QSSD…EGKK). Positions 959–967 (RKQLFQRKN) match the D-box 2 motif. The 30-residue stretch at 966–995 (KNHAATVIQKAWRTYWVRKSSCKTRHSRSQ) folds into the IQ 2 domain.

As to quaternary structure, interacts with apc2. Binds calmodulin.

It localises to the cytoplasm. It is found in the cytoskeleton. Required for normal renal development and establishment of left-right axis. Probably acts as a molecular switch between different Wnt signaling pathways. Inhibits the canonical Wnt pathway by targeting cytoplasmic disheveled for degradation by the ubiquitin-proteasome. This suggests that it is required in renal development to oppose the repression of terminal differentiation of tubular epithelial cells by Wnt signaling. Plays a central role in convergent extension movements in gastrulating embryos, a processus regulated by Wnt signaling. The chain is Inversin-B (invs-b) from Xenopus laevis (African clawed frog).